Reading from the N-terminus, the 271-residue chain is Malonyl-[acyl-carrier protein] O-methyltransferase (271 aa).

The protein belongs to the methyltransferase superfamily.

It carries out the reaction malonyl-[ACP] + S-adenosyl-L-methionine = malonyl-[ACP] methyl ester + S-adenosyl-L-homocysteine. Its pathway is cofactor biosynthesis; biotin biosynthesis. Functionally, converts the free carboxyl group of a malonyl-thioester to its methyl ester by transfer of a methyl group from S-adenosyl-L-methionine (SAM). It allows to synthesize pimeloyl-ACP via the fatty acid synthetic pathway. This chain is Malonyl-[acyl-carrier protein] O-methyltransferase, found in Halalkalibacterium halodurans (strain ATCC BAA-125 / DSM 18197 / FERM 7344 / JCM 9153 / C-125) (Bacillus halodurans).